The chain runs to 65 residues: Large ribosomal subunit protein bL35 (65 aa).

Positions 1–15 (MPKMKTKSSAKKRFS) are enriched in basic residues. Positions 1-21 (MPKMKTKSSAKKRFSIRAGGS) are disordered.

This sequence belongs to the bacterial ribosomal protein bL35 family.

This chain is Large ribosomal subunit protein bL35, found in Dechloromonas aromatica (strain RCB).